A 265-amino-acid chain; its full sequence is Mlc titration factor A (265 aa).

H111, H148, H152, and E211 together coordinate Zn(2+).

It belongs to the MtfA family. As to quaternary structure, interacts with Mlc. It depends on Zn(2+) as a cofactor.

Its subcellular location is the cytoplasm. Functionally, involved in the modulation of the activity of the glucose-phosphotransferase system (glucose-PTS). Interacts with the transcriptional repressor Mlc, preventing its interaction with DNA and leading to the modulation of expression of genes regulated by Mlc, including ptsG, which encodes the PTS system glucose-specific EIICB component. Shows zinc-dependent metallopeptidase activity. The sequence is that of Mlc titration factor A from Escherichia coli (strain UTI89 / UPEC).